We begin with the raw amino-acid sequence, 376 residues long: DNA double-strand break repair protein Mre11 (376 aa).

Positions 5, 7, 46, and 81 each coordinate Mn(2+). His82 (proton donor) is an active-site residue. Residues His159, His189, and His191 each contribute to the Mn(2+) site.

This sequence belongs to the MRE11/RAD32 family. In terms of assembly, homodimer. Forms a heterotetramer composed of two Mre11 subunits and two Rad50 subunits. Mn(2+) serves as cofactor.

With respect to regulation, nuclease activity is regulated by Rad50. Functionally, part of the Rad50/Mre11 complex, which is involved in the early steps of DNA double-strand break (DSB) repair. The complex may facilitate opening of the processed DNA ends to aid in the recruitment of HerA and NurA. Mre11 binds to DSB ends and has both double-stranded 3'-5' exonuclease activity and single-stranded endonuclease activity. This is DNA double-strand break repair protein Mre11 from Thermoplasma acidophilum (strain ATCC 25905 / DSM 1728 / JCM 9062 / NBRC 15155 / AMRC-C165).